The primary structure comprises 319 residues: Acetyl-coenzyme A carboxylase carboxyl transferase subunit alpha (319 aa).

In terms of domain architecture, CoA carboxyltransferase C-terminal spans 39-293; the sequence is RLQKKSNDLT…KAVLEKQLHE (255 aa).

This sequence belongs to the AccA family. Acetyl-CoA carboxylase is a heterohexamer composed of biotin carboxyl carrier protein (AccB), biotin carboxylase (AccC) and two subunits each of ACCase subunit alpha (AccA) and ACCase subunit beta (AccD).

The protein resides in the cytoplasm. The enzyme catalyses N(6)-carboxybiotinyl-L-lysyl-[protein] + acetyl-CoA = N(6)-biotinyl-L-lysyl-[protein] + malonyl-CoA. Its pathway is lipid metabolism; malonyl-CoA biosynthesis; malonyl-CoA from acetyl-CoA: step 1/1. Its function is as follows. Component of the acetyl coenzyme A carboxylase (ACC) complex. First, biotin carboxylase catalyzes the carboxylation of biotin on its carrier protein (BCCP) and then the CO(2) group is transferred by the carboxyltransferase to acetyl-CoA to form malonyl-CoA. In Neisseria meningitidis serogroup A / serotype 4A (strain DSM 15465 / Z2491), this protein is Acetyl-coenzyme A carboxylase carboxyl transferase subunit alpha.